The following is a 121-amino-acid chain: uncharacterized protein (121 aa).

A helical transmembrane segment spans residues 65–84; the sequence is TILFYTPTLICFLFLQNFLY.

It localises to the membrane. This is an uncharacterized protein from Saccharomyces cerevisiae (strain ATCC 204508 / S288c) (Baker's yeast).